A 1207-amino-acid chain; its full sequence is DNA-directed RNA polymerase subunit beta' (1207 aa).

Zn(2+)-binding residues include cysteine 60, cysteine 62, cysteine 75, and cysteine 78. 3 residues coordinate Mg(2+): aspartate 450, aspartate 452, and aspartate 454. Zn(2+) is bound by residues cysteine 818, cysteine 892, cysteine 899, and cysteine 902.

The protein belongs to the RNA polymerase beta' chain family. The RNAP catalytic core consists of 2 alpha, 1 beta, 1 beta' and 1 omega subunit. When a sigma factor is associated with the core the holoenzyme is formed, which can initiate transcription. Requires Mg(2+) as cofactor. It depends on Zn(2+) as a cofactor.

The catalysed reaction is RNA(n) + a ribonucleoside 5'-triphosphate = RNA(n+1) + diphosphate. In terms of biological role, DNA-dependent RNA polymerase catalyzes the transcription of DNA into RNA using the four ribonucleoside triphosphates as substrates. The sequence is that of DNA-directed RNA polymerase subunit beta' from Lactococcus lactis subsp. lactis (strain IL1403) (Streptococcus lactis).